The chain runs to 379 residues: Na(+)/H(+) antiporter NhaA (379 aa).

12 helical membrane-spanning segments follow: residues 14–34, 59–79, 95–115, 125–145, 154–174, 175–195, 200–220, 221–241, 261–281, 292–312, 328–348, and 359–379; these read AGGILLFIFATLAIILANTPL, LLMWVNDGLMAVFFMLVGMEV, VFPAIAATGGMVVPAIVFLVF, GWAIPMATDIAFALGVIALLG, IFLLALAIIDDLGAIVVIALF, FSHDLSPQAFIFAGIAVAILI, LKITALSAYGIVGIILWASVL, KSGVHATLAGVIIGFCIPLNG, FAILPLFAFCNAGVSLIGMGM, IALGLLLGKPLGIFSFCFVAV, IFAVSVLCGIGFTMSMFLAGL, and VTALARLGILIGSGFSAVLGY.

The protein belongs to the NhaA Na(+)/H(+) (TC 2.A.33) antiporter family.

The protein resides in the cell inner membrane. It catalyses the reaction Na(+)(in) + 2 H(+)(out) = Na(+)(out) + 2 H(+)(in). In terms of biological role, na(+)/H(+) antiporter that extrudes sodium in exchange for external protons. The chain is Na(+)/H(+) antiporter NhaA from Pasteurella multocida (strain Pm70).